Reading from the N-terminus, the 68-residue chain is Peptide Smp13 (68 aa).

The signal sequence occupies residues 1-23 (MKTQFAIFLITLVLFQMFSQSDA). Phenylalanine 36 is modified (phenylalanine amide). Residues 37 to 68 (GKRGLGDHDDLDELFDGEISQADIDFLKEIMQ) constitute a propeptide that is removed on maturation.

The protein belongs to the non-disulfide-bridged peptide (NDBP) superfamily. Short antimicrobial peptide (group 4) family. Expressed by the venom gland.

Its subcellular location is the secreted. Its function is as follows. Peptide with unknown function. Does not show antimicrobial activity against the Gram-positive, and Gram-negative bacteria tested, as well as against the fungus C.albicans. This Scorpio palmatus (Israeli golden scorpion) protein is Peptide Smp13.